We begin with the raw amino-acid sequence, 77 residues long: Chassatide C13 (77 aa).

The N-terminal stretch at Met1 to Ala24 is a signal peptide. Positions Ser25–Asn44 are cleaved as a propeptide — removed in mature form. The cyclopeptide (Gly-Asn) cross-link spans Gly45 to Asn75. Intrachain disulfides connect Cys48-Cys65, Cys52-Cys67, and Cys57-Cys72. Residues Glu76–Leu77 constitute a propeptide, removed in mature form.

This is a cyclic peptide. In terms of tissue distribution, expressed in fruit and pedicel but not in root, leaf and stem (at protein level).

In terms of biological role, probably participates in a plant defense mechanism. The chain is Chassatide C13 from Chassalia chartacea (Chassalia curviflora).